A 608-amino-acid polypeptide reads, in one-letter code: UvrABC system protein C (608 aa).

One can recognise a GIY-YIG domain in the interval 16–94 (NRPGVYRMFD…IKEWRPPYNI (79 aa)). In terms of domain architecture, UVR spans 204–239 (NALADELNVGMEQAAMRLDFEKAAELRDQVAILRRV).

It belongs to the UvrC family. As to quaternary structure, interacts with UvrB in an incision complex.

The protein resides in the cytoplasm. Its function is as follows. The UvrABC repair system catalyzes the recognition and processing of DNA lesions. UvrC both incises the 5' and 3' sides of the lesion. The N-terminal half is responsible for the 3' incision and the C-terminal half is responsible for the 5' incision. This is UvrABC system protein C from Pseudomonas aeruginosa (strain LESB58).